The sequence spans 119 residues: Small ribosomal subunit protein uS10 (119 aa).

Ala2 carries the N-acetylalanine modification. Residue Lys4 forms a Glycyl lysine isopeptide (Lys-Gly) (interchain with G-Cter in ubiquitin) linkage. Lys8 carries the N6-succinyllysine; alternate modification. A Glycyl lysine isopeptide (Lys-Gly) (interchain with G-Cter in ubiquitin); alternate cross-link involves residue Lys8. A Phosphothreonine modification is found at Thr9. 2 positions are modified to N6-acetyllysine: Lys34 and Lys75. Ser93 carries the post-translational modification Phosphoserine.

It belongs to the universal ribosomal protein uS10 family. In terms of assembly, component of the 40S small ribosomal subunit. In terms of processing, polyubiquitinated by ZNF598 via 'Lys-63'-linked ubiquitin chains when a ribosome has stalled, initiating the ribosome quality control (RQC) pathway to degrade the potentially detrimental aberrant nascent polypeptide. Deubiquitinated by OTUD3 and USP21, antagonizing ZNF598 activity. Ufmylated by UFL1.

It is found in the cytoplasm. Component of the small ribosomal subunit. The ribosome is a large ribonucleoprotein complex responsible for the synthesis of proteins in the cell. The chain is Small ribosomal subunit protein uS10 (Rps20) from Rattus norvegicus (Rat).